Here is a 709-residue protein sequence, read N- to C-terminus: Probable serine/threonine-protein kinase zyg-1 (709 aa).

One can recognise a Protein kinase domain in the interval 13–251; the sequence is FQNLQQIGQG…LKEIVMTDYV (239 aa). ATP-binding positions include 19–27 and K41; that span reads IGQGGFGVV. The active-site Proton acceptor is D130. Disordered stretches follow at residues 254–329 and 591–633; these read KMGE…DRAR and SSSQ…PAAT. 2 stretches are compositionally biased toward basic and acidic residues: residues 262–291 and 302–313; these read SREH…ERRP and SRRDPDGYRAAH. Residues 607–627 show a composition bias toward polar residues; the sequence is PLSSRTTSSLNVRNGVSSDEN.

It belongs to the protein kinase superfamily. Ser/Thr protein kinase family.

It localises to the cytoplasm. It is found in the cytoskeleton. The protein localises to the microtubule organizing center. The protein resides in the centrosome. Its subcellular location is the centriole. It catalyses the reaction L-seryl-[protein] + ATP = O-phospho-L-seryl-[protein] + ADP + H(+). The enzyme catalyses L-threonyl-[protein] + ATP = O-phospho-L-threonyl-[protein] + ADP + H(+). In terms of biological role, protein kinase that plays a central role in centrosome duplication. Paternal copy is required to regulate synthesis of daughter centrioles prior to fertilization. Maternal copy regulates centrosome duplication during later cell cycles. Functions upstream of sas-5 and sas-6, and is required for their localization to the centrosome. This chain is Probable serine/threonine-protein kinase zyg-1 (zyg-1), found in Caenorhabditis briggsae.